We begin with the raw amino-acid sequence, 496 residues long: Probable cytosol aminopeptidase (496 aa).

Residues Lys266 and Asp271 each coordinate Mn(2+). Lys278 is an active-site residue. Mn(2+)-binding residues include Asp290, Asp349, and Glu351. Arg353 is a catalytic residue.

Belongs to the peptidase M17 family. Mn(2+) serves as cofactor.

It localises to the cytoplasm. It carries out the reaction Release of an N-terminal amino acid, Xaa-|-Yaa-, in which Xaa is preferably Leu, but may be other amino acids including Pro although not Arg or Lys, and Yaa may be Pro. Amino acid amides and methyl esters are also readily hydrolyzed, but rates on arylamides are exceedingly low.. It catalyses the reaction Release of an N-terminal amino acid, preferentially leucine, but not glutamic or aspartic acids.. Its function is as follows. Presumably involved in the processing and regular turnover of intracellular proteins. Catalyzes the removal of unsubstituted N-terminal amino acids from various peptides. The chain is Probable cytosol aminopeptidase from Trichodesmium erythraeum (strain IMS101).